The primary structure comprises 189 residues: Threonylcarbamoyl-AMP synthase (189 aa).

One can recognise a YrdC-like domain in the interval 9–189; the sequence is ASAQRKLSVY…IDGETGKRLR (181 aa).

It belongs to the SUA5 family. TsaC subfamily.

The protein resides in the cytoplasm. The catalysed reaction is L-threonine + hydrogencarbonate + ATP = L-threonylcarbamoyladenylate + diphosphate + H2O. Required for the formation of a threonylcarbamoyl group on adenosine at position 37 (t(6)A37) in tRNAs that read codons beginning with adenine. Catalyzes the conversion of L-threonine, HCO(3)(-)/CO(2) and ATP to give threonylcarbamoyl-AMP (TC-AMP) as the acyladenylate intermediate, with the release of diphosphate. The protein is Threonylcarbamoyl-AMP synthase of Neisseria gonorrhoeae (strain ATCC 700825 / FA 1090).